Reading from the N-terminus, the 174-residue chain is Gamma-crystallin C (174 aa).

2 Beta/gamma crystallin 'Greek key' domains span residues 2–40 and 41–83; these read GKIT…RVDS and GCWM…CLIS. Residue Cys23 is modified to S-methylcysteine. The segment at 84-87 is connecting peptide; it reads DTSS. 2 consecutive Beta/gamma crystallin 'Greek key' domains span residues 88–128 and 129–171; these read HRLR…HVLE and GCWV…RRVV.

This sequence belongs to the beta/gamma-crystallin family.

Crystallins are the dominant structural components of the vertebrate eye lens. The protein is Gamma-crystallin C (CRYGC) of Bos taurus (Bovine).